The chain runs to 374 residues: Probable dual-specificity RNA methyltransferase RlmN (374 aa).

The Proton acceptor role is filled by E108. Residues Y114–R361 form the Radical SAM core domain. C121 and C367 are disulfide-bonded. Residues C128, C132, and C135 each contribute to the [4Fe-4S] cluster site. Residues G188–E189, S222, S245–H247, and N324 each bind S-adenosyl-L-methionine. The active-site S-methylcysteine intermediate is C367.

It belongs to the radical SAM superfamily. RlmN family. The cofactor is [4Fe-4S] cluster.

The protein resides in the cytoplasm. The enzyme catalyses adenosine(2503) in 23S rRNA + 2 reduced [2Fe-2S]-[ferredoxin] + 2 S-adenosyl-L-methionine = 2-methyladenosine(2503) in 23S rRNA + 5'-deoxyadenosine + L-methionine + 2 oxidized [2Fe-2S]-[ferredoxin] + S-adenosyl-L-homocysteine. The catalysed reaction is adenosine(37) in tRNA + 2 reduced [2Fe-2S]-[ferredoxin] + 2 S-adenosyl-L-methionine = 2-methyladenosine(37) in tRNA + 5'-deoxyadenosine + L-methionine + 2 oxidized [2Fe-2S]-[ferredoxin] + S-adenosyl-L-homocysteine. Its function is as follows. Specifically methylates position 2 of adenine 2503 in 23S rRNA and position 2 of adenine 37 in tRNAs. This Mycobacterium sp. (strain JLS) protein is Probable dual-specificity RNA methyltransferase RlmN.